The chain runs to 416 residues: Tumor necrosis factor receptor superfamily member 19 (416 aa).

The N-terminal stretch at 1–29 is a signal peptide; it reads MALKVLPLHRTVLFAAILFLLHLACKVSC. Residues 30 to 170 lie on the Extracellular side of the membrane; it reads ETGDCRQQEF…TVSSPRDTAL (141 aa). TNFR-Cys repeat units follow at residues 33 to 72 and 74 to 114; these read DCRQ…DAQC and PCRP…DAVC. 8 disulfides stabilise this stretch: Cys-34–Cys-46, Cys-49–Cys-62, Cys-52–Cys-72, Cys-75–Cys-89, Cys-92–Cys-106, Cys-95–Cys-114, Cys-117–Cys-135, and Cys-138–Cys-149. An N-linked (GlcNAc...) asparagine glycan is attached at Asn-105. A TNFR-Cys 3; truncated repeat occupies 116–149; that stretch reads DCLPGFYRKTKLVGFQDMECVPCGDPPPPYEPHC. A helical membrane pass occupies residues 171 to 191; that stretch reads AAVICSALATVLLALLILCVI. Residues 192 to 416 are Cytoplasmic-facing; sequence YCKRQFMEKK…LAMPTAFQDA (225 aa). The tract at residues 321–416 is disordered; the sequence is LCDSYPELTG…LAMPTAFQDA (96 aa). 3 stretches are compositionally biased toward polar residues: residues 331–351, 360–370, and 381–396; these read EDTN…SSGG, LESSGNVSEST, and VWEQ…TPSQ.

Associates with TRAF1, TRAF2, TRAF3 and TRAF5. Interacts with LINGO1. In terms of tissue distribution, highly expressed in adult brain, and in embryos from day 11-17, but not earlier. Detected in embryonic brain and epithelium, and at lower levels in adult heart, lung and liver. In neonatal mice, mainly in hair follicles and neuron-like cells in the cerebellum, but not in the skin epidermis. Isoform 3 was found in embryonic day 17.5 skin but not in brain and liver.

The protein localises to the cell membrane. It localises to the secreted. Can mediate activation of c-Jun and NF-kappa-B. May promote caspase-independent cell death. Isoform 2 and isoform 3 may act as decoy receptors. The protein is Tumor necrosis factor receptor superfamily member 19 (Tnfrsf19) of Mus musculus (Mouse).